The following is a 352-amino-acid chain: Organic solute transporter subunit alpha (352 aa).

Over 1–45 (MDVAHPEEVTRFSPDILMEKFNVSEACFLPPPISIQLILQLTWLD) the chain is Extracellular. A glycan (N-linked (GlcNAc...) asparagine) is linked at asparagine 22. A helical membrane pass occupies residues 46–66 (IGVFAALTAMTVLTIAIYLEI). Over 67–82 (VCYLMDKVKCPIKRKT) the chain is Cytoplasmic. A helical membrane pass occupies residues 83–103 (LMWNSAAPTVIAITSCLGLWV). The Extracellular segment spans residues 104 to 108 (PRAIM). A helical transmembrane segment spans residues 109–129 (FVDMAAAMYFGVGFYLMLLII). Residues 130–173 (VQGYGGEEAMLQHLATHTIRISTGPCCCCCPCLPHIHLTRQKYK) lie on the Cytoplasmic side of the membrane. A helical transmembrane segment spans residues 174–194 (IFVLGAFQVAFLRPALFLLGV). At 195–210 (VLWTNGLYDPDDWSST) the chain is on the extracellular side. A helical membrane pass occupies residues 211 to 231 (SIFLWLNLFLGVSTILGLWPV). Residues 232 to 250 (NVLFRHSKVLMADQKLTCK) lie on the Cytoplasmic side of the membrane. A helical membrane pass occupies residues 251 to 271 (FALFQAILILSSLQNSIIGTL). The Extracellular portion of the chain corresponds to 272–294 (AGAGHIGCAPPYSARTRGQQMNN). Residues 295–312 (QLLIIEMFFVGILTRISY) form a helical membrane-spanning segment. Residues 313–352 (RKRDDRPGHRHVGEVQQIVRECDQPAIADQQADHSSISHI) are Cytoplasmic-facing.

The protein belongs to the OST-alpha family. As to quaternary structure, interacts with slc51b. The Ost-alpha/Ost-beta complex is a heterodimer composed of alpha (slc51a) and beta (slc51b) subunit. In terms of tissue distribution, expressed in liver.

The protein resides in the cell membrane. Its subcellular location is the endoplasmic reticulum membrane. It carries out the reaction taurocholate(out) = taurocholate(in). It catalyses the reaction prostaglandin E2(out) = prostaglandin E2(in). The catalysed reaction is estrone 3-sulfate(out) = estrone 3-sulfate(in). The enzyme catalyses dehydroepiandrosterone 3-sulfate(out) = dehydroepiandrosterone 3-sulfate(in). It carries out the reaction tauroursodeoxycholate(out) = tauroursodeoxycholate(in). It catalyses the reaction glycoursodeoxycholate(out) = glycoursodeoxycholate(in). The catalysed reaction is glycocholate(out) = glycocholate(in). The enzyme catalyses taurochenodeoxycholate(out) = taurochenodeoxycholate(in). It carries out the reaction glycochenodeoxycholate(out) = glycochenodeoxycholate(in). It catalyses the reaction taurodeoxycholate(out) = taurodeoxycholate(in). The catalysed reaction is glycodeoxycholate(out) = glycodeoxycholate(in). Its function is as follows. Essential component of the Ost-alpha/Ost-beta complex, a heterodimer that acts as the intestinal basolateral transporter responsible for the translocation of bile acids (such as taurocholate), steroids (such as estrone sulfate), and eicosanoids (such as prostaglandin E2). This Leucoraja erinaceus (Little skate) protein is Organic solute transporter subunit alpha (slc51a).